An 814-amino-acid chain; its full sequence is Dimethyl sulfoxide reductase DmsA (814 aa).

A signal peptide (tat-type signal) is located at residues 1–45 (MKTKIPDAVLAAEVSRRGLVKTTAIGGLAMASSALTLPFSRIAHA). Residues 56-118 (EKVIWSACTV…SMRRRVYNPD (63 aa)) enclose the 4Fe-4S Mo/W bis-MGD-type domain. [4Fe-4S] cluster-binding residues include cysteine 63, cysteine 67, cysteine 71, and cysteine 104. Residues 172–176 (LGGTM), serine 205, 244–245 (ET), 270–271 (ID), 291–293 (GTD), 386–387 (WG), arginine 390, asparagine 488, 512–513 (ID), histidine 701, 707–709 (HST), asparagine 788, and 804–805 (SH) contribute to the Mo-bis(molybdopterin guanine dinucleotide) site.

The protein belongs to the prokaryotic molybdopterin-containing oxidoreductase family. In terms of assembly, heterotrimeric enzyme composed of a catalytic heterodimer (DmsAB) and a membrane anchor protein (DmsC). Requires [4Fe-4S] cluster as cofactor. Mo-bis(molybdopterin guanine dinucleotide) is required as a cofactor. In terms of processing, exported by the Tat system. The position of the signal peptide cleavage has been experimentally proven. Can also be exported by the Sec system.

It localises to the cell membrane. The catalysed reaction is dimethyl sulfide + a menaquinone + H2O = dimethyl sulfoxide + a menaquinol. With respect to regulation, inhibited by dithionite, sodium hydrogensulfite and tungstate. Functionally, catalyzes the reduction of dimethyl sulfoxide (DMSO) to dimethyl sulfide (DMS). DMSO reductase serves as the terminal reductase under anaerobic conditions, with DMSO being the terminal electron acceptor. Terminal reductase during anaerobic growth on various sulfoxides and N-oxide compounds. Allows E.coli to grow anaerobically on DMSO as respiratory oxidant. The polypeptide is Dimethyl sulfoxide reductase DmsA (dmsA) (Escherichia coli (strain K12)).